The following is a 432-amino-acid chain: Adenylosuccinate synthetase (432 aa).

Residues 13–19 and 41–43 contribute to the GTP site; these read GDEGKGK and GHT. Residue Asp14 is the Proton acceptor of the active site. 2 residues coordinate Mg(2+): Asp14 and Gly41. IMP is bound by residues 14-17, 39-42, Thr130, Arg144, Gln225, Thr240, and Arg304; these read DEGK and NAGH. Residue His42 is the Proton donor of the active site. 300 to 306 lines the substrate pocket; it reads AVTGRPR. GTP is bound by residues Arg306, 332 to 334, and 415 to 417; these read KLD and STG.

It belongs to the adenylosuccinate synthetase family. In terms of assembly, homodimer. It depends on Mg(2+) as a cofactor.

The protein localises to the cytoplasm. The catalysed reaction is IMP + L-aspartate + GTP = N(6)-(1,2-dicarboxyethyl)-AMP + GDP + phosphate + 2 H(+). It participates in purine metabolism; AMP biosynthesis via de novo pathway; AMP from IMP: step 1/2. Its function is as follows. Plays an important role in the de novo pathway of purine nucleotide biosynthesis. Catalyzes the first committed step in the biosynthesis of AMP from IMP. The protein is Adenylosuccinate synthetase of Mannheimia succiniciproducens (strain KCTC 0769BP / MBEL55E).